Here is a 969-residue protein sequence, read N- to C-terminus: RNA polymerase-associated protein RapA (969 aa).

The Helicase ATP-binding domain occupies 164–334 (EVGRRYAPRV…FARLRLLDPD (171 aa)). 177–184 (DEVGLGKT) provides a ligand contact to ATP. The DEAH box signature appears at 280 to 283 (DEAH). Residues 492–668 (RVNWLLELLK…GKSDGLESLI (177 aa)) enclose the Helicase C-terminal domain.

It belongs to the SNF2/RAD54 helicase family. RapA subfamily. In terms of assembly, interacts with the RNAP. Has a higher affinity for the core RNAP than for the holoenzyme. Its ATPase activity is stimulated by binding to RNAP.

Functionally, transcription regulator that activates transcription by stimulating RNA polymerase (RNAP) recycling in case of stress conditions such as supercoiled DNA or high salt concentrations. Probably acts by releasing the RNAP, when it is trapped or immobilized on tightly supercoiled DNA. Does not activate transcription on linear DNA. Probably not involved in DNA repair. The polypeptide is RNA polymerase-associated protein RapA (Aliivibrio fischeri (strain MJ11) (Vibrio fischeri)).